Reading from the N-terminus, the 438-residue chain is 2-(3-amino-3-carboxypropyl)histidine synthase subunit 1 (438 aa).

[4Fe-4S] cluster is bound by residues C110, C214, and C342. The residue at position 418 (S418) is a Phosphoserine.

It belongs to the DPH1/DPH2 family. DPH1 subfamily. As to quaternary structure, component of the 2-(3-amino-3-carboxypropyl)histidine synthase complex composed of DPH1, DPH2, DPH3 and a NADH-dependent reductase. Interacts with DPH2 and RBM8A. It depends on [4Fe-4S] cluster as a cofactor.

It is found in the nucleus. It localises to the cytoplasm. It catalyses the reaction L-histidyl-[translation elongation factor 2] + S-adenosyl-L-methionine = 2-[(3S)-amino-3-carboxypropyl]-L-histidyl-[translation elongation factor 2] + S-methyl-5'-thioadenosine + H(+). It functions in the pathway protein modification; peptidyl-diphthamide biosynthesis. Functionally, catalyzes the first step of diphthamide biosynthesis, a post-translational modification of histidine which occurs in elongation factor 2. DPH1 and DPH2 transfer a 3-amino-3-carboxypropyl (ACP) group from S-adenosyl-L-methionine (SAM) to a histidine residue, the reaction is assisted by a reduction system comprising DPH3 and a NADH-dependent reductase. This chain is 2-(3-amino-3-carboxypropyl)histidine synthase subunit 1 (DPH1), found in Bos taurus (Bovine).